The sequence spans 283 residues: Glutamate racemase (283 aa).

Residues 7–8 (DS) and 39–40 (YG) each bind substrate. Residue Cys-70 is the Proton donor/acceptor of the active site. A substrate-binding site is contributed by 71–72 (NT). Catalysis depends on Cys-206, which acts as the Proton donor/acceptor. 207 to 208 (TH) is a substrate binding site.

This sequence belongs to the aspartate/glutamate racemases family.

It carries out the reaction L-glutamate = D-glutamate. The protein operates within cell wall biogenesis; peptidoglycan biosynthesis. Provides the (R)-glutamate required for cell wall biosynthesis. The sequence is that of Glutamate racemase from Phenylobacterium zucineum (strain HLK1).